The primary structure comprises 143 residues: MELNGIKPADGAKHYKRRVGRGIGSGIGKTAGRGHKGQKSRAGGYHKVGFEGGQMPMQRRLPKRGFKSQLLKFNAEVTLSALEQLGASEVDLVTLKQAGLVGELAKVVKVIMTGKISKAVKLTGIGATAAAKVAIEAAGGSLA.

The segment at M1 to R59 is disordered. Residues R21–A31 are compositionally biased toward gly residues.

Belongs to the universal ribosomal protein uL15 family. In terms of assembly, part of the 50S ribosomal subunit.

Its function is as follows. Binds to the 23S rRNA. The sequence is that of Large ribosomal subunit protein uL15 from Albidiferax ferrireducens (strain ATCC BAA-621 / DSM 15236 / T118) (Rhodoferax ferrireducens).